A 217-amino-acid polypeptide reads, in one-letter code: Ras-related protein RIC2 (217 aa).

Residues Gly-21–Ser-28, Asp-69–Gln-73, and Asn-127–Asp-130 each bind GTP. S-geranylgeranyl cysteine attachment occurs at residues Cys-214 and Cys-215.

Belongs to the small GTPase superfamily. Rab family.

It localises to the cell membrane. Possesses GTPase activity. The chain is Ras-related protein RIC2 (RIC2) from Oryza sativa subsp. japonica (Rice).